The sequence spans 119 residues: Small ribosomal subunit protein eS25 (119 aa).

A disordered region spans residues 1-42 (MPPKKDTKASAKQPQKTQKKKEGSGGGKAKKKKWSKGKVRDK). Over residues 28-37 (KAKKKKWSKG) the composition is skewed to basic residues.

This sequence belongs to the eukaryotic ribosomal protein eS25 family.

This Spodoptera frugiperda (Fall armyworm) protein is Small ribosomal subunit protein eS25 (RpS25).